The chain runs to 253 residues: Ubiquinone/menaquinone biosynthesis C-methyltransferase UbiE (253 aa).

S-adenosyl-L-methionine contacts are provided by residues Thr-76, Asp-97, 125-126, and Ser-142; that span reads NA.

This sequence belongs to the class I-like SAM-binding methyltransferase superfamily. MenG/UbiE family.

The enzyme catalyses a 2-demethylmenaquinol + S-adenosyl-L-methionine = a menaquinol + S-adenosyl-L-homocysteine + H(+). It catalyses the reaction a 2-methoxy-6-(all-trans-polyprenyl)benzene-1,4-diol + S-adenosyl-L-methionine = a 5-methoxy-2-methyl-3-(all-trans-polyprenyl)benzene-1,4-diol + S-adenosyl-L-homocysteine + H(+). It participates in quinol/quinone metabolism; menaquinone biosynthesis; menaquinol from 1,4-dihydroxy-2-naphthoate: step 2/2. Its pathway is cofactor biosynthesis; ubiquinone biosynthesis. Methyltransferase required for the conversion of demethylmenaquinol (DMKH2) to menaquinol (MKH2) and the conversion of 2-polyprenyl-6-methoxy-1,4-benzoquinol (DDMQH2) to 2-polyprenyl-3-methyl-6-methoxy-1,4-benzoquinol (DMQH2). In Xanthomonas axonopodis pv. citri (strain 306), this protein is Ubiquinone/menaquinone biosynthesis C-methyltransferase UbiE.